Reading from the N-terminus, the 702-residue chain is Transposon Tn7 transposition protein TnsB (702 aa).

Positions 1 to 139 (MWQINEVVLF…GQTPNALIPD (139 aa)) are DNA-binding domain 1 (DBD1). Positions 105–124 (VEHVVQEHKVTKATVYKLLR) form a DNA-binding region, H-T-H motif. Positions 137-160 (IPDYKNSGAPGERRSATGTAKIGR) are disordered. The interval 140–172 (YKNSGAPGERRSATGTAKIGRAREYGKGEGTKV) is linker 1. Positions 173 to 233 (TPEIERLFRL…QFRYFYDREY (61 aa)) are DNA-binding domain 2 (DBD2). A linker 2 region spans residues 234–267 (PKAQRLKSRVKAGVYKKDVRPLSSTATSQALGPG). Residues 262-480 (QALGPGSRYE…IPVQLWQWGM (219 aa)) enclose the Integrase catalytic domain. Residues 268–582 (SRYEIDATIA…RSRQFKGLSF (315 aa)) form a catalytic domain (CD) region. Residues 589–702 (QAQEKHNKAN…FQDPPEKDES (114 aa)) are C-terminal domain. The segment at 623–702 (KLTPSTTEPK…FQDPPEKDES (80 aa)) is disordered.

Heteromer with TnsA.

Its function is as follows. Sequence-specific, DNA-binding protein required for Tn7 transposition. Recognizes sequences necessary for recombination at both left and right ends of Tn7 and, together with TnsA, forms the transposase. TnsB executes the 3'-DNA strand breakage and joining reactions. TnsB binding introduces DNA bending. There are 3 DNA-binding sites in the left and 4 in the right end of Tn7; as TnsB levels increase more TnsB is bound, suggesting high protein levels contribute to transposon immunity. Binding of TnsB to the transposon right end represses expression of the downstream transposition genes. TnsABC + TnsD promote high-frequency insertion of Tn7 into a specific target site known as att-Tn7 whereas TnsABC + TnsE promote low-frequency insertion into many different sites. The chain is Transposon Tn7 transposition protein TnsB from Escherichia coli.